The chain runs to 475 residues: Dynein regulatory complex subunit 4 (475 aa).

Positions 1–22 (MPPKRKSSPKGKTPTVVDGLST) are disordered. Positions 1–113 (MPPKRKSSPK…LLYEQQNMLS (113 aa)) are regulates microtubule-binding. 3 coiled-coil regions span residues 20 to 104 (LSTE…VKHL), 142 to 200 (RSLK…QEEE), and 242 to 426 (KNLD…VARV). The tract at residues 114–257 (ELKAESIIST…TSLKEELKEM (144 aa)) is microtubule-binding.

Belongs to the DRC4 family. Component of the nexin-dynein regulatory complex (N-DRC). Interacts with microtubules.

Its subcellular location is the cytoplasm. It localises to the cytoskeleton. The protein resides in the cell projection. It is found in the cilium. The protein localises to the flagellum. Its subcellular location is the cilium axoneme. It localises to the cilium basal body. The protein resides in the golgi apparatus. It is found in the flagellum axoneme. Its function is as follows. Component of the nexin-dynein regulatory complex (N-DRC), a key regulator of ciliary/flagellar motility which maintains the alignment and integrity of the distal axoneme and regulates microtubule sliding in motile axonemes. Plays an important role in the assembly of the N-DRC linker. Plays dual roles at both the primary (or non-motile) cilia to regulate hedgehog signaling and in motile cilia to coordinate cilia movement. Required for proper slow muscle development and positively regulates ciliary smoothened (SMO)-dependent Hedgehog (Hh) signaling pathway. Required for tether cilia motility which is essential for normal otolith formation and localization in the developing inner ear. The polypeptide is Dynein regulatory complex subunit 4 (gas8) (Danio rerio (Zebrafish)).